The sequence spans 51 residues: MARVKPLGKKLRMAKAIKQNRRVPPWVVAKTGGRVIDNPKRRHWRRSKLKP.

Belongs to the eukaryotic ribosomal protein eL39 family.

The protein is Large ribosomal subunit protein eL39 of Methanopyrus kandleri (strain AV19 / DSM 6324 / JCM 9639 / NBRC 100938).